Reading from the N-terminus, the 54-residue chain is Hemolytic toxin (54 aa).

The plays an important role in the hemolytic activity stretch occupies residues 3 to 12 (ALAGTIIAGA). Residues 11–30 (GASLGFQILDKVLGELGKVS) form an N-terminal region region.

It belongs to the actinoporin family. Sea anemone subfamily. As to quaternary structure, octamer or nonamer in membranes. Monomer in the soluble state.

Its subcellular location is the secreted. The protein resides in the nematocyst. The protein localises to the target cell membrane. In terms of biological role, pore-forming protein that forms cations-selective hydrophilic pores of around 1 nm and causes cytolysis. Pore formation is a multi-step process that involves specific recognition of membrane sphingomyelin (but neither cholesterol nor phosphatidylcholine) using aromatic rich region and adjacent phosphocholine (POC) binding site, firm binding to the membrane (mainly driven by hydrophobic interactions) accompanied by the transfer of the N-terminal region to the lipid-water interface and finally pore formation after oligomerization of monomers. This Heteractis magnifica (Magnificent sea anemone) protein is Hemolytic toxin.